Here is an 863-residue protein sequence, read N- to C-terminus: MKSSEIRQKFLEFFEARGHVIVPSSPLVPGNDPTLLFTNAGMVQFKDVFLGQDKRPYVRAVSSQRCVRAGGKHNDLENVGYTARHHTFFEMLGNFSFGDYFKRKAILFAWEFLTGSLGIPREKLWATVYAEDDEAADIWLNEVGIDPSRLVRIATSDNFWQMGDTGPCGPCSEIFYDHGPAVAGGPPGSENAEGDRYIEIWNLVFMQYNRDASGELHPLPKPSVDTGMGLERIAAVMQQVHSNYEIDLFRSLIEAAARVTGSKDLSNNSLKVIADHIRACAFLITDGVIPGNEGRGYVLRRILRRAIRHGYRLGQKQPFFYLLVDDLVDVMGPAYPELTRARKHVAGVIRQEEERFAETLENGMEVLEAALSHGNETLSGEIVFRLYDTFGFPVDLTADIARERGIVIDMAGFETCMAQQRDRARASGKFTMQTGLEYTGQPTEFHGYATLQHEAQILALYKQGSRVDFIEADDEAVVVLDQTPFYAESGGQAGDSGELLSGSGTFTVNDTQKIQAGVFGHNGMLSSGRMAIGDRVIARVDQIARTNTAYNHSATHLLHAALRQVLGNHVTQKGSLVDASRLRFDFSHNSAMQENEIRQVENLVNAQIRKNHEVATQLMTYDDAVKQGAMALFGEKYGDTVRVVAMGDFSTELCGGTHVSYSGDIGFFRIVAESGVAAGIRRIEALTGDAALAYTQQQEQQLQQVADALKAAPQEAAQKLSQILDNIRQMEKEIATLRSKLAGVQSTSLIEQAQEIKGIRVLATTLENVNVKTLRETLDNFKNRLKSCVVVLGTIEKDKVTLIAGVTDDLTVKLKAGDLINFVAQQVGGKGGGRADMAQAGGTLPEKLPQALASVPSWVEQNL.

Residues histidine 552, histidine 556, cysteine 654, and histidine 658 each coordinate Zn(2+).

The protein belongs to the class-II aminoacyl-tRNA synthetase family. It depends on Zn(2+) as a cofactor.

The protein localises to the cytoplasm. It carries out the reaction tRNA(Ala) + L-alanine + ATP = L-alanyl-tRNA(Ala) + AMP + diphosphate. Functionally, catalyzes the attachment of alanine to tRNA(Ala) in a two-step reaction: alanine is first activated by ATP to form Ala-AMP and then transferred to the acceptor end of tRNA(Ala). Also edits incorrectly charged Ser-tRNA(Ala) and Gly-tRNA(Ala) via its editing domain. The sequence is that of Alanine--tRNA ligase from Nitrosomonas europaea (strain ATCC 19718 / CIP 103999 / KCTC 2705 / NBRC 14298).